The sequence spans 725 residues: Probable ATP-dependent RNA helicase DDX4 (725 aa).

Positions methionine 1–proline 251 are disordered. Residues serine 28–serine 43 show a composition bias toward polar residues. Positions aspartate 70 to asparagine 79 are enriched in basic and acidic residues. 2 stretches are compositionally biased toward low complexity: residues serine 143 to glycine 156 and glycine 196 to glycine 206. Residues serine 223 and serine 227 each carry the phosphoserine modification. The segment at lysine 229–isoleucine 248 is interaction with RANBP9. Positions leucine 289–lysine 317 match the Q motif motif. A Helicase ATP-binding domain is found at isoleucine 320–phenylalanine 503. Position 333 to 340 (alanine 333 to threonine 340) interacts with ATP. A DEAD box motif is present at residues aspartate 447–aspartate 450. The region spanning lysine 531 to alanine 676 is the Helicase C-terminal domain. A disordered region spans residues lysine 702 to aspartate 725. Polar residues predominate over residues serine 703–proline 716. Residue serine 723 is modified to Phosphoserine.

The protein belongs to the DEAD box helicase family. DDX4/VASA subfamily. As to quaternary structure, found in a mRNP complex, at least composed of TDRD1, TDRD6, TDRD7 and DDX4. Interacts with RANBP9. Interacts with RANBP10. Interacts with PIWIL2 and MAEL. Interacts with BMAL1 and CLOCK. Interacts with Tex19.1 and, probably, Tex19.2. Interacts with RBM46.

It localises to the cytoplasm. Its subcellular location is the perinuclear region. It catalyses the reaction ATP + H2O = ADP + phosphate + H(+). In terms of biological role, ATP-dependent RNA helicase required during spermatogenesis to repress transposable elements and preventing their mobilization, which is essential for the germline integrity. Acts via the piRNA metabolic process, which mediates the repression of transposable elements during meiosis by forming complexes composed of piRNAs and Piwi proteins and governs the methylation and subsequent repression of transposons. Involved in the secondary piRNAs metabolic process, the production of piRNAs in fetal male germ cells through a ping-pong amplification cycle. Required for PIWIL2 slicing-triggered piRNA biogenesis: helicase activity enables utilization of one of the slice cleavage fragments generated by PIWIL2 and processing these pre-piRNAs into piRNAs. The chain is Probable ATP-dependent RNA helicase DDX4 (DDX4) from Macaca fascicularis (Crab-eating macaque).